A 230-amino-acid chain; its full sequence is 3,4-dihydroxy-2-butanone 4-phosphate synthase (230 aa).

Residues 42–43, D47, 155–159, and E179 each bind D-ribulose 5-phosphate; these read RE and RRGHT. E43 lines the Mg(2+) pocket. H158 provides a ligand contact to Mg(2+).

Belongs to the DHBP synthase family. Homodimer. Mg(2+) is required as a cofactor. Mn(2+) serves as cofactor.

It carries out the reaction D-ribulose 5-phosphate = (2S)-2-hydroxy-3-oxobutyl phosphate + formate + H(+). It functions in the pathway cofactor biosynthesis; riboflavin biosynthesis; 2-hydroxy-3-oxobutyl phosphate from D-ribulose 5-phosphate: step 1/1. Its function is as follows. Catalyzes the conversion of D-ribulose 5-phosphate to formate and 3,4-dihydroxy-2-butanone 4-phosphate. This Bordetella pertussis (strain Tohama I / ATCC BAA-589 / NCTC 13251) protein is 3,4-dihydroxy-2-butanone 4-phosphate synthase.